Reading from the N-terminus, the 490-residue chain is Betaine aldehyde dehydrogenase (490 aa).

Positions 26, 27, and 93 each coordinate K(+). 150-152 (GAW) contacts NAD(+). The Charge relay system role is filled by Lys-162. 176–179 (KPSE) provides a ligand contact to NAD(+). Val-180 contacts K(+). 230–233 (GTDT) contacts NAD(+). Residue Leu-246 participates in K(+) binding. The Proton acceptor role is filled by Glu-252. Positions 254, 286, and 387 each coordinate NAD(+). Catalysis depends on Cys-286, which acts as the Nucleophile. Cys-286 is subject to Cysteine sulfenic acid (-SOH). Residues Lys-457 and Gly-460 each contribute to the K(+) site. Glu-464 (charge relay system) is an active-site residue.

It belongs to the aldehyde dehydrogenase family. As to quaternary structure, dimer of dimers. K(+) is required as a cofactor.

The catalysed reaction is betaine aldehyde + NAD(+) + H2O = glycine betaine + NADH + 2 H(+). It participates in amine and polyamine biosynthesis; betaine biosynthesis via choline pathway; betaine from betaine aldehyde: step 1/1. Functionally, involved in the biosynthesis of the osmoprotectant glycine betaine. Catalyzes the irreversible oxidation of betaine aldehyde to the corresponding acid. The polypeptide is Betaine aldehyde dehydrogenase (Pseudomonas syringae pv. tomato (strain ATCC BAA-871 / DC3000)).